Here is a 494-residue protein sequence, read N- to C-terminus: GTPase Der (494 aa).

2 consecutive EngA-type G domains span residues 3–166 (PVVA…VGEK) and 208–381 (IKLA…ECAT). GTP is bound by residues 9 to 16 (GRPNVGKS), 56 to 60 (DTGGI), 118 to 121 (NKTD), 214 to 221 (GRPNVGKS), 261 to 265 (DTAGV), and 326 to 329 (NKWD). Residues 382–466 (RRVNTSMLTK…PIRIQFKEGE (85 aa)) enclose the KH-like domain.

This sequence belongs to the TRAFAC class TrmE-Era-EngA-EngB-Septin-like GTPase superfamily. EngA (Der) GTPase family. In terms of assembly, associates with the 50S ribosomal subunit.

Its function is as follows. GTPase that plays an essential role in the late steps of ribosome biogenesis. The chain is GTPase Der from Serratia proteamaculans (strain 568).